Here is a 1624-residue protein sequence, read N- to C-terminus: Pappalysin-1 (1624 aa).

A signal peptide spans 1–22 (MRLWSWVLRLGLLSAALGCGLA). The propeptide occupies 23-81 (ERPRRVRRDPRAVRPPRPAAGPATCATRAARGRRASPPPPPGGAWEAVRVPRRRQQRAA). The tract at residues 28–93 (VRRDPRAVRP…AEEPSPPSRA (66 aa)) is disordered. The span at 42 to 51 (AGPATCATRA) shows a compositional bias: low complexity. Cystine bridges form between Cys141–Cys232, Cys324–Cys619, Cys329–Cys654, Cys411–Cys425, Cys421–Cys437, Cys454–Cys470, Cys471–Cys482, Cys580–Cys597, Cys584–Cys609, Cys707–Cys875, Cys710–Cys878, Cys750–Cys832, Cys772–Cys778, Cys944–Cys972, Cys957–Cys968, Cys980–Cys987, and Cys996–Cys1008. Positions 272–583 (RGLHTPLPQL…ISEIQSCSDP (312 aa)) are metalloprotease. N-linked (GlcNAc...) asparagine glycans are attached at residues Asn387 and Asn398. An N-linked (GlcNAc...) asparagine glycan is attached at Asn426. N-linked (GlcNAc...) asparagine glycosylation is present at Asn516. Position 559 (His559) interacts with Zn(2+). Glu560 is an active-site residue. Zn(2+)-binding residues include His563 and His569. N-linked (GlcNAc...) asparagine glycosylation is found at Asn598, Asn616, and Asn722. Asn822 carries N-linked (GlcNAc...) asparagine glycosylation. Residue Asn1023 is glycosylated (N-linked (GlcNAc...) asparagine). Intrachain disulfides connect Cys1033–Cys1067, Cys1048–Cys1136, Cys1189–Cys1202, Cys1212–Cys1266, Cys1224–Cys1235, Cys1239–Cys1277, Cys1282–Cys1326, Cys1297–Cys1307, Cys1311–Cys1339, Cys1343–Cys1396, Cys1359–Cys1370, Cys1374–Cys1407, Cys1412–Cys1455, Cys1425–Cys1435, Cys1439–Cys1468, Cys1475–Cys1536, Cys1489–Cys1499, Cys1503–Cys1551, and Cys1555–Cys1573. 5 consecutive Sushi domains span residues 1210–1279 (ADCP…ACEP), 1280–1341 (VDCG…LCEL), 1342–1409 (MCLA…TCVP), 1410–1470 (VTCD…VCRE), and 1473–1553 (GQCS…HCVK). Asn1219 and Asn1223 each carry an N-linked (GlcNAc...) asparagine glycan. Asn1320 is a glycosylation site (N-linked (GlcNAc...) asparagine). Asn1516 carries N-linked (GlcNAc...) asparagine glycosylation.

This sequence belongs to the peptidase M43B family. In terms of assembly, homodimer; disulfide-linked. In pregnancy serum, predominantly found as a disulfide-linked 2:2 heterotetramer with the proform of PRG2. Requires Zn(2+) as cofactor. As to expression, detected in kidney, spleen, brain, ovary, breast, skin, prostate, uterus, and placenta.

It is found in the secreted. The catalysed reaction is Cleavage of the 135-Met-|-Lys-136 bond in insulin-like growth factor binding protein (IGFBP)-4, and the 143-Ser-|-Lys-144 bond in IGFBP-5.. Functionally, metalloproteinase which specifically cleaves IGFBP-4 and IGFBP-5, resulting in release of bound IGF. Cleavage of IGFBP-4 is dramatically enhanced by the presence of IGF, whereas cleavage of IGFBP-5 is slightly inhibited by the presence of IGF. Isoform 2 cleaves IGFBP-4 very slowly compared to PAPP-A, but its ability to cleave IGFBP-5 is unaffected. The sequence is that of Pappalysin-1 (Pappa) from Mus musculus (Mouse).